The sequence spans 718 residues: Catalase-peroxidase (718 aa).

The segment at residues 98-219 (WHAAGTYRMG…LAATEMGLIY (122 aa)) is a cross-link (tryptophyl-tyrosyl-methioninium (Trp-Tyr) (with M-245)). H99 acts as the Proton acceptor in catalysis. Residues 219–245 (YVNPEGPQASGDPRSAAPFIRATFGNM) constitute a cross-link (tryptophyl-tyrosyl-methioninium (Tyr-Met) (with W-98)). H260 provides a ligand contact to heme b.

Belongs to the peroxidase family. Peroxidase/catalase subfamily. As to quaternary structure, homodimer or homotetramer. It depends on heme b as a cofactor. Formation of the three residue Trp-Tyr-Met cross-link is important for the catalase, but not the peroxidase activity of the enzyme.

It carries out the reaction H2O2 + AH2 = A + 2 H2O. It catalyses the reaction 2 H2O2 = O2 + 2 H2O. Its function is as follows. Bifunctional enzyme with both catalase and broad-spectrum peroxidase activity. This is Catalase-peroxidase from Acinetobacter baumannii (strain AB307-0294).